The chain runs to 346 residues: Probable choline kinase 1 (346 aa).

ATP-binding residues include arginine 73, glutamine 210, and aspartate 227.

The protein belongs to the choline/ethanolamine kinase family. As to expression, expressed in roots. Expressed at low levels in cauline leaves and flowers.

It carries out the reaction choline + ATP = phosphocholine + ADP + H(+). It participates in phospholipid metabolism; phosphatidylcholine biosynthesis; phosphocholine from choline: step 1/1. Involved in phospholipid biosynthesis. Catalyzes the first step in phosphatidylcholine biosynthesis. This chain is Probable choline kinase 1 (CK1), found in Arabidopsis thaliana (Mouse-ear cress).